A 209-amino-acid polypeptide reads, in one-letter code: Ribosomal RNA large subunit methyltransferase E (209 aa).

S-adenosyl-L-methionine contacts are provided by Gly-63, Trp-65, Asp-83, Asp-99, and Asp-124. Lys-164 functions as the Proton acceptor in the catalytic mechanism.

Belongs to the class I-like SAM-binding methyltransferase superfamily. RNA methyltransferase RlmE family.

It is found in the cytoplasm. The enzyme catalyses uridine(2552) in 23S rRNA + S-adenosyl-L-methionine = 2'-O-methyluridine(2552) in 23S rRNA + S-adenosyl-L-homocysteine + H(+). Its function is as follows. Specifically methylates the uridine in position 2552 of 23S rRNA at the 2'-O position of the ribose in the fully assembled 50S ribosomal subunit. The polypeptide is Ribosomal RNA large subunit methyltransferase E (Shewanella amazonensis (strain ATCC BAA-1098 / SB2B)).